The chain runs to 870 residues: DNA mismatch repair protein MutS (870 aa).

ATP is bound at residue 617-624 (GPNMAGKS).

The protein belongs to the DNA mismatch repair MutS family.

In terms of biological role, this protein is involved in the repair of mismatches in DNA. It is possible that it carries out the mismatch recognition step. This protein has a weak ATPase activity. The protein is DNA mismatch repair protein MutS of Phocaeicola vulgatus (strain ATCC 8482 / DSM 1447 / JCM 5826 / CCUG 4940 / NBRC 14291 / NCTC 11154) (Bacteroides vulgatus).